A 412-amino-acid polypeptide reads, in one-letter code: Argininosuccinate synthase (412 aa).

8–16 serves as a coordination point for ATP; sequence AYSGGLDTS. Residue Tyr-87 participates in L-citrulline binding. Residue Gly-117 participates in ATP binding. L-aspartate contacts are provided by Thr-119, Asn-123, and Asp-124. Asn-123 lines the L-citrulline pocket. The L-citrulline site is built by Arg-127, Ser-175, Glu-259, and Tyr-271.

The protein belongs to the argininosuccinate synthase family. Type 1 subfamily. As to quaternary structure, homotetramer.

Its subcellular location is the cytoplasm. It carries out the reaction L-citrulline + L-aspartate + ATP = 2-(N(omega)-L-arginino)succinate + AMP + diphosphate + H(+). It participates in amino-acid biosynthesis; L-arginine biosynthesis; L-arginine from L-ornithine and carbamoyl phosphate: step 2/3. This is Argininosuccinate synthase from Clavibacter michiganensis subsp. michiganensis (strain NCPPB 382).